The following is an 880-amino-acid chain: Guanine nucleotide-binding protein subunit beta 2 (880 aa).

The residue at position 24 (Ser24) is a Phosphoserine. Kelch repeat units follow at residues 291-339 (NIYI…MVNN), 377-425 (HIFF…KIDI), and 501-552 (TVII…LTPS). A disordered region spans residues 624-649 (FNSGSAAQESPKAGASASSASAASFD). Low complexity predominate over residues 638–647 (ASASSASAAS). The Kelch 4 repeat unit spans residues 691 to 738 (TVVLHGGSNGLNVLDDMWLMDLECETWTPIETFAKADSSEDGDEKLDS).

G proteins are composed of 3 units, alpha, beta and gamma. GPB1 interacts with the alpha subunit GPA2.

It is found in the cytoplasm. Its subcellular location is the mitochondrion. Beta subunit of a guanine nucleotide-binding protein (G protein). G proteins are involved as modulators or transducers in various transmembrane signaling systems. The beta and gamma chains are required for the GTPase activity, for replacement of GDP by GTP, and for G protein-effector interaction. Involved in the determination of the cAMP level according to nutritional conditions, most probably as a regulator of cAMP phosphodiesterase. Required for the control of pseudohyphal and haploid invasive growth. This Saccharomyces cerevisiae (strain ATCC 204508 / S288c) (Baker's yeast) protein is Guanine nucleotide-binding protein subunit beta 2 (GPB2).